The sequence spans 1065 residues: Valine--tRNA ligase, mitochondrial (1065 aa).

The N-terminal 15 residues, M1–G15, are a transit peptide targeting the mitochondrion. Residues A27–R52 are disordered. Residues R42–R52 are compositionally biased toward basic and acidic residues. Positions P146–H156 match the 'HIGH' region motif. The 'KMSKS' region motif lies at K659 to S663. Position 662 (K662) interacts with ATP.

Belongs to the class-I aminoacyl-tRNA synthetase family.

It localises to the mitochondrion. It carries out the reaction tRNA(Val) + L-valine + ATP = L-valyl-tRNA(Val) + AMP + diphosphate. Its function is as follows. Catalyzes the attachment of valine to tRNA(Val) in a two-step reaction: valine is first activated by ATP to form Val-AMP and then transferred to the acceptor end of tRNA(Val). This Rattus norvegicus (Rat) protein is Valine--tRNA ligase, mitochondrial (Vars2).